The sequence spans 197 residues: Large ribosomal subunit protein uL11 (197 aa).

The protein belongs to the universal ribosomal protein uL11 family. In terms of assembly, part of the ribosomal stalk of the 50S ribosomal subunit. Interacts with L10 and the large rRNA to form the base of the stalk. L10 forms an elongated spine to which L12 dimers bind in a sequential fashion forming a multimeric L10(L12)X complex. One or more lysine residues are methylated.

Its function is as follows. Forms part of the ribosomal stalk which helps the ribosome interact with GTP-bound translation factors. The polypeptide is Large ribosomal subunit protein uL11 (Mycoplasma mobile (strain ATCC 43663 / 163K / NCTC 11711) (Mesomycoplasma mobile)).